The chain runs to 344 residues: Inositol 2-dehydrogenase/D-chiro-inositol 3-dehydrogenase (344 aa).

It belongs to the Gfo/Idh/MocA family. As to quaternary structure, homotetramer.

The enzyme catalyses myo-inositol + NAD(+) = scyllo-inosose + NADH + H(+). It carries out the reaction 1D-chiro-inositol + NAD(+) = scyllo-inosine + NADH + H(+). It functions in the pathway polyol metabolism; myo-inositol degradation into acetyl-CoA; acetyl-CoA from myo-inositol: step 1/7. Functionally, involved in the oxidation of myo-inositol (MI) and D-chiro-inositol (DCI) to 2-keto-myo-inositol (2KMI or 2-inosose) and 1-keto-D-chiro-inositol (1KDCI), respectively. The chain is Inositol 2-dehydrogenase/D-chiro-inositol 3-dehydrogenase from Bacillus licheniformis (strain ATCC 14580 / DSM 13 / JCM 2505 / CCUG 7422 / NBRC 12200 / NCIMB 9375 / NCTC 10341 / NRRL NRS-1264 / Gibson 46).